The primary structure comprises 166 residues: Mitochondrial inner membrane protease subunit 1 (166 aa).

Catalysis depends on residues serine 40 and lysine 83.

This sequence belongs to the peptidase S26 family. IMP1 subfamily. Heterodimer of 2 subunits, IMMPL1 and IMMPL2.

Its subcellular location is the mitochondrion inner membrane. Catalyzes the removal of transit peptides required for the targeting of proteins from the mitochondrial matrix, across the inner membrane, into the inter-membrane space. Known to process the nuclear encoded protein DIABLO. The chain is Mitochondrial inner membrane protease subunit 1 (IMMP1L) from Homo sapiens (Human).